Reading from the N-terminus, the 354-residue chain is MFIETLNLSHFRNFSEVALSPSPKINIITGDNGSGKTSLLEAIYLLGFGRSFRPGGFRQLIKEGNSGFTVFCRSQDYAIGVRRSTDGEQSLRLNGANVQRMSDVARLVPVQLLTPESVDILLEGPGQRRQFIDWGVFHVEHSFYSDWVAYTQLLKQRNSLLKQRSLPVREDRYWKEQLAYYGERISKSREKYLEELNDYIQELAKSFLSDVTMEVRLKSGWDTSQSLFDALESHTEKDKKYGFTSVGAHKADIKVIADGVEVKHRLSRGQLKTAITALKLAQGKHYQKIKRQPCIYLVDDLTSELDSKNQALLCRELENLDAQVFITAITGKQLSDKFQKSPRMFHVEHGVINE.

30 to 37 (GDNGSGKT) serves as a coordination point for ATP.

Belongs to the RecF family.

It localises to the cytoplasm. Functionally, the RecF protein is involved in DNA metabolism; it is required for DNA replication and normal SOS inducibility. RecF binds preferentially to single-stranded, linear DNA. It also seems to bind ATP. In Idiomarina loihiensis (strain ATCC BAA-735 / DSM 15497 / L2-TR), this protein is DNA replication and repair protein RecF.